A 282-amino-acid polypeptide reads, in one-letter code: 1,4-dihydroxy-6-naphtoate synthase (282 aa).

Substrate is bound by residues 57 to 59 (KVS) and 109 to 110 (TA). H153 acts as the Proton acceptor in catalysis.

This sequence belongs to the MqnA/MqnD family. MqnD subfamily.

The catalysed reaction is cyclic dehypoxanthinylfutalosinate = 1,4-dihydroxy-6-naphthoate + dihydroxyacetone. It functions in the pathway quinol/quinone metabolism; menaquinone biosynthesis. Catalyzes the conversion of cyclic dehypoxanthine futalosine (cyclic DHFL) into 1,4-dihydroxy-6-naphthoate, a step in the biosynthesis of menaquinone (MK, vitamin K2). In Streptomyces coelicolor (strain ATCC BAA-471 / A3(2) / M145), this protein is 1,4-dihydroxy-6-naphtoate synthase.